A 318-amino-acid polypeptide reads, in one-letter code: UDP-N-acetylenolpyruvoylglucosamine reductase (318 aa).

Residues 39-202 (VGGPADLLVR…TRVQLTLRPG (164 aa)) enclose the FAD-binding PCMH-type domain. Residue Arg182 is part of the active site. Residues 214-223 (DRDGRRRTQP) show a composition bias toward basic and acidic residues. The segment at 214-235 (DRDGRRRTQPLDRPTFGSTFTN) is disordered. Residue Ser231 is the Proton donor of the active site. The active site involves Glu301.

It belongs to the MurB family. The cofactor is FAD.

Its subcellular location is the cytoplasm. It catalyses the reaction UDP-N-acetyl-alpha-D-muramate + NADP(+) = UDP-N-acetyl-3-O-(1-carboxyvinyl)-alpha-D-glucosamine + NADPH + H(+). It participates in cell wall biogenesis; peptidoglycan biosynthesis. Its function is as follows. Cell wall formation. The sequence is that of UDP-N-acetylenolpyruvoylglucosamine reductase from Anaeromyxobacter sp. (strain Fw109-5).